The chain runs to 126 residues: Small ribosomal subunit protein uS8 (126 aa).

It belongs to the universal ribosomal protein uS8 family. In terms of assembly, part of the 30S ribosomal subunit. Contacts proteins S5 and S12.

Functionally, one of the primary rRNA binding proteins, it binds directly to 16S rRNA central domain where it helps coordinate assembly of the platform of the 30S subunit. This chain is Small ribosomal subunit protein uS8, found in Desulfovibrio desulfuricans (strain ATCC 27774 / DSM 6949 / MB).